The primary structure comprises 239 residues: Apoptosis regulator Bcl-2 (239 aa).

The BH4 signature appears at 10–30 (DNREIVMKYIHYKLSQRGYEW). A disordered region spans residues 39-85 (PPGAAPAPGIFSSQPGHTPHPAASRDPVARTSPLQTPAAPGAAAGPA). Thr69 is subject to Phosphothreonine; by MAPK8. Phosphoserine; by MAPK8 and PKC is present on Ser70. The span at 75–85 (PAAPGAAAGPA) shows a compositional bias: low complexity. The residue at position 87 (Ser87) is a Phosphoserine; by MAPK8. Residues 92–107 (VVHLTLRQAGDDFSRR) form a required for interaction with SEPTIN4 isoform ARTS. Required XIAP-mediated ubiquitination and apoptosis region. A BH3 motif is present at residues 93 to 107 (VHLTLRQAGDDFSRR). Residues 136–155 (ELFRDGVNWGRIVAFFEFGG) carry the BH1 motif. Positions 187–202 (TWIQDNGGWDAFVELY) match the BH2 motif. The helical transmembrane segment at 212-233 (FSWLSLKTLLSLALVGACITLG) threads the bilayer.

Belongs to the Bcl-2 family. As to quaternary structure, forms homodimers, and heterodimers with BAX, BAD, BAK and Bcl-X(L). Heterodimerization with BAX requires intact BH1 and BH2 motifs, and is necessary for anti-apoptotic activity. Part of a complex composed of SEPTIN4 isoform ARTS, XIAP and BCL2, within the complex interacts (via BH3 domain) with SEPTIN4 isoform ARTS and XIAP, SEPTIN4 isoform ARTS acts as a scaffold protein and stabilizes the complex. Component of the complex, at least composed of LRPPRC, BECN1 and BCL2; the interactions prevent BECN1 from forming an autophagy-inducing complex with PIK3C3. Interacts with EI24. Also interacts with APAF1, BBC3, BCL2L1, BNIPL, MRPL41 and TP53BP2. Binding to FKBP8 seems to target BCL2 to the mitochondria and probably interferes with the binding of BCL2 to its targets. Interacts with BAG1 in an ATP-dependent manner. Interacts with RAF1 (the 'Ser-338' and 'Ser-339' phosphorylated form). Interacts (via the BH4 domain) with EGLN3; the interaction prevents the formation of the BAX-BCL2 complex and inhibits the anti-apoptotic activity of BCL2. Interacts with G0S2; this interaction also prevents the formation of the anti-apoptotic BAX-BCL2 complex. Interacts with RTL10/BOP. Interacts with the SCF(FBXO10) complex. Interacts (via the loop between motifs BH4 and BH3) with NLRP1 (via LRR repeats), but not with NLRP2, NLRP3, NLRP4, PYCARD, nor MEFV. Interacts with GIMAP3/IAN4, GIMAP4/IAN1 and GIMAP5/IAN5. Interacts with BCAP31. Interacts with IRF3; the interaction is inhibited by Sendai virus infection. Interacts with BECN1; thereby inhibiting autophagy in non-starvation conditions. Interacts with AMBRA1; thereby inhibiting autophagy. (Microbial infection) Interacts with Toxoplasma gondii ROP17; the interaction probably promotes BCL2 phosphorylation and degradation. In terms of processing, phosphorylation/dephosphorylation on Ser-70 regulates anti-apoptotic activity. Growth factor-stimulated phosphorylation on Ser-70 by PKC is required for the anti-apoptosis activity and occurs during the G2/M phase of the cell cycle. In the absence of growth factors, BCL2 appears to be phosphorylated by other protein kinases such as ERKs and stress-activated kinases. Phosphorylated by MAPK8/JNK1 at Thr-69, Ser-70 and Ser-87, which stimulates starvation-induced autophagy. Dephosphorylated by protein phosphatase 2A (PP2A). Proteolytically cleaved by caspases during apoptosis. The cleaved protein, lacking the BH4 motif, has pro-apoptotic activity, causes the release of cytochrome c into the cytosol promoting further caspase activity. Post-translationally, monoubiquitinated by PRKN, leading to an increase in its stability. Ubiquitinated by SCF(FBXO10), leading to its degradation by the proteasome. Ubiquitinated by XIAP, leading to its degradation by the proteasome. In terms of tissue distribution, expressed in a variety of tissues.

Its subcellular location is the mitochondrion outer membrane. The protein localises to the nucleus membrane. It localises to the endoplasmic reticulum membrane. The protein resides in the cytoplasm. Its function is as follows. Suppresses apoptosis in a variety of cell systems including factor-dependent lymphohematopoietic and neural cells. Regulates cell death by controlling the mitochondrial membrane permeability. Appears to function in a feedback loop system with caspases. Inhibits caspase activity either by preventing the release of cytochrome c from the mitochondria and/or by binding to the apoptosis-activating factor (APAF-1). Also acts as an inhibitor of autophagy: interacts with BECN1 and AMBRA1 during non-starvation conditions and inhibits their autophagy function. May attenuate inflammation by impairing NLRP1-inflammasome activation, hence CASP1 activation and IL1B release. The sequence is that of Apoptosis regulator Bcl-2 (BCL2) from Homo sapiens (Human).